A 293-amino-acid polypeptide reads, in one-letter code: Oxidoreductase R2 (293 aa).

It belongs to the asaB hydroxylase/desaturase family.

The protein operates within secondary metabolite biosynthesis. In terms of biological role, oxidoreductase; part of the gene cluster that mediates the biosynthesis of squalestatin S1 (SQS1, also known as zaragozic acid A), a heavily oxidized fungal polyketide that offers potent cholesterol lowering activity by targeting squalene synthase (SS). SQS1 is composed of a 2,8-dioxobicyclic[3.2.1]octane-3,4,5-tricarboxyclic acid core that is connected to two lipophilic polyketide arms. These initial steps feature the priming of an unusual benzoic acid starter unit onto the highly reducing polyketide synthase pks2, followed by oxaloacetate extension and product release to generate a tricarboxylic acid containing product. The phenylalanine ammonia lyase (PAL) M7 and the acyl-CoA ligase M9 are involved in transforming phenylalanine into benzoyl-CoA. The citrate synthase-like protein R3 is involved in connecting the C-alpha-carbons of the hexaketide chain and oxaloacetate to afford the tricarboxylic acid unit. The potential hydrolytic enzymes, M8 and M10, are in close proximity to pks2 and may participate in product release. On the other side, the tetraketide arm is synthesized by a the squalestatin tetraketide synthase pks1 and enzymatically esterified to the core in the last biosynthetic step, by the acetyltransferase M4. The biosynthesis of the tetraketide must involve 3 rounds of chain extension. After the first and second rounds methyl-transfer occurs, and in all rounds of extension the ketoreductase and dehydratase are active. The enoyl reductase and C-MeT of pks1 are not active in the final round of extension. The acetyltransferase M4 appears to have a broad substrate selectivity for its acyl CoA substrate, allowing the in vitro synthesis of novel squalestatins. The biosynthesis of SQS1 requires several oxidative steps likely performed by oxidoreductases M1, R1 and R2. Finally, in support of the identification of the cluster as being responsible for SQS1 production, the cluster contains a gene encoding a putative squalene synthase (SS) R6, suggesting a likely mechanism for self-resistance. The chain is Oxidoreductase R2 from Phoma sp. (strain ATCC 20986 / MF5453).